A 491-amino-acid chain; its full sequence is [Pyruvate dehydrogenase (acetyl-transferring)] kinase 2, mitochondrial (491 aa).

The Histidine kinase domain maps to 153 to 480 (PTIRTLEDAS…DVVLKLGNLM (328 aa)). Residues 300–307 (EILRNTYE), Asp341, 359–360 (SK), and 383–446 (DEVH…GIGL) each bind ATP.

The protein belongs to the PDK/BCKDK protein kinase family. As to quaternary structure, interacts with PKP1.

The protein resides in the mitochondrion matrix. It carries out the reaction L-seryl-[pyruvate dehydrogenase E1 alpha subunit] + ATP = O-phospho-L-seryl-[pyruvate dehydrogenase E1 alpha subunit] + ADP + H(+). Its function is as follows. Inhibits the mitochondrial pyruvate dehydrogenase complex by phosphorylation of the E1 alpha subunit (PDA1), thus contributing to the regulation of glucose metabolism. The protein is [Pyruvate dehydrogenase (acetyl-transferring)] kinase 2, mitochondrial of Saccharomyces cerevisiae (strain ATCC 204508 / S288c) (Baker's yeast).